Reading from the N-terminus, the 570-residue chain is PTS system lactose-specific EIICB component (570 aa).

One can recognise a PTS EIIC type-3 domain in the interval 9-410 (IEKGKPFFEK…VVDIIIYYPF (402 aa)). The next 9 helical transmembrane spans lie at 31-51 (GFISAMPVILFSSIFLLIAYV), 65-85 (AILMKPYNYTMGLVAFLVAGT), 104-124 (INFISTMQAAMCGFLFLASDP), 133-153 (AFMGTKGLLTAFLSAFVTVIV), 178-198 (FKDLIPFSAVIIILYALDLVI), 223-243 (GWIGVTIIFGAFALFWFVGIH), 283-303 (MFIVTFGGTGATLVVPFMFMW), 340-360 (VFFIPFVLAPIVNVWIFKLFV), and 382-402 (IIMGTGFGLWSFVLAITLIVV). The PTS EIIB type-3 domain occupies 467-570 (QTNVLVLCAG…LDFVQQQFEN (104 aa)). The active-site Phosphocysteine intermediate; for EIIB activity is the Cys-474. Cys-474 is subject to Phosphocysteine; by EIIA.

It localises to the cell membrane. It carries out the reaction lactose(out) + N(pros)-phospho-L-histidyl-[protein] = lactose 6-phosphate(in) + L-histidyl-[protein]. In terms of biological role, the phosphoenolpyruvate-dependent sugar phosphotransferase system (sugar PTS), a major carbohydrate active transport system, catalyzes the phosphorylation of incoming sugar substrates concomitantly with their translocation across the cell membrane. The enzyme II LacEF PTS system is involved in lactose transport, but can also use galactose, isopropyl beta-thio-galactopyranoside and thiomethyl beta-D-galactopyranoside (TMG) as substrates. This Staphylococcus aureus protein is PTS system lactose-specific EIICB component.